Reading from the N-terminus, the 404-residue chain is Cysteine desulfurase IscS (404 aa).

Pyridoxal 5'-phosphate-binding positions include 75–76 (AT), Asn-155, Gln-183, and 203–205 (SAH). Position 206 is an N6-(pyridoxal phosphate)lysine (Lys-206). Thr-243 provides a ligand contact to pyridoxal 5'-phosphate. Catalysis depends on Cys-328, which acts as the Cysteine persulfide intermediate. Cys-328 is a [2Fe-2S] cluster binding site.

This sequence belongs to the class-V pyridoxal-phosphate-dependent aminotransferase family. NifS/IscS subfamily. In terms of assembly, homodimer. Forms a heterotetramer with IscU, interacts with other sulfur acceptors. Pyridoxal 5'-phosphate is required as a cofactor.

It localises to the cytoplasm. The enzyme catalyses (sulfur carrier)-H + L-cysteine = (sulfur carrier)-SH + L-alanine. It participates in cofactor biosynthesis; iron-sulfur cluster biosynthesis. Master enzyme that delivers sulfur to a number of partners involved in Fe-S cluster assembly, tRNA modification or cofactor biosynthesis. Catalyzes the removal of elemental sulfur atoms from cysteine to produce alanine. Functions as a sulfur delivery protein for Fe-S cluster synthesis onto IscU, an Fe-S scaffold assembly protein, as well as other S acceptor proteins. The protein is Cysteine desulfurase IscS of Buchnera aphidicola subsp. Acyrthosiphon pisum (strain 5A).